The primary structure comprises 445 residues: Exodeoxyribonuclease 7 large subunit (445 aa).

Belongs to the XseA family. Heterooligomer composed of large and small subunits.

It is found in the cytoplasm. The enzyme catalyses Exonucleolytic cleavage in either 5'- to 3'- or 3'- to 5'-direction to yield nucleoside 5'-phosphates.. In terms of biological role, bidirectionally degrades single-stranded DNA into large acid-insoluble oligonucleotides, which are then degraded further into small acid-soluble oligonucleotides. The chain is Exodeoxyribonuclease 7 large subunit from Staphylococcus epidermidis (strain ATCC 35984 / DSM 28319 / BCRC 17069 / CCUG 31568 / BM 3577 / RP62A).